We begin with the raw amino-acid sequence, 674 residues long: Multifunctional alkene reductase/demethylase OYE (674 aa).

Residues Gly-62 and Gln-105 each coordinate FMN. Catalysis depends on His-175, which acts as the Proton donor. Positions 223 and 299 each coordinate FMN. [4Fe-4S] cluster-binding residues include Cys-345, Cys-351, and Cys-358. FAD contacts are provided by Ala-391, Gln-418, and Arg-428.

It in the N-terminal section; belongs to the NADH:flavin oxidoreductase/NADH oxidase family. It depends on [4Fe-4S] cluster as a cofactor. The cofactor is FAD. FMN is required as a cofactor.

The enzyme catalyses 3-phenylpropanoate + NAD(+) = (E)-cinnamate + NADH + H(+). It carries out the reaction N-methyl-L-proline + NAD(+) + H2O = L-proline + formaldehyde + NADH + H(+). Functionally, a member of the 2-enoate reductase subfamily of old yellow enzymes (OYE) able to reduce alpha/beta alkenes near electron-withdrawing groups as well as perform oxidative demethylation chemistry. Prefers NADH over NADPH as cosubstrate. May play a role in osmotic stress response in situ. The protein is Multifunctional alkene reductase/demethylase OYE of Caballeronia cordobensis (Burkholderia cordobensis).